A 70-amino-acid polypeptide reads, in one-letter code: Uteroglobin (70 aa).

It belongs to the secretoglobin family. Antiparallel homodimer; disulfide-linked. Interaction with LMBR1L is controversial. As to expression, club cells (nonciliated cells of the surface epithelium of the pulmonary airways).

Its subcellular location is the secreted. Its function is as follows. Binds phosphatidylcholine, phosphatidylinositol, polychlorinated biphenyls (PCB) and weakly progesterone, potent inhibitor of phospholipase A2. The sequence is that of Uteroglobin (SCGB1A1) from Macaca fuscata fuscata (Japanese macaque).